Here is a 368-residue protein sequence, read N- to C-terminus: UDP-N-acetylglucosamine--N-acetylmuramyl-(pentapeptide) pyrophosphoryl-undecaprenol N-acetylglucosamine transferase (368 aa).

Residues 13–15 (TGG), N127, R168, S200, I254, and Q299 each bind UDP-N-acetyl-alpha-D-glucosamine.

The protein belongs to the glycosyltransferase 28 family. MurG subfamily.

The protein localises to the cell inner membrane. The enzyme catalyses di-trans,octa-cis-undecaprenyl diphospho-N-acetyl-alpha-D-muramoyl-L-alanyl-D-glutamyl-meso-2,6-diaminopimeloyl-D-alanyl-D-alanine + UDP-N-acetyl-alpha-D-glucosamine = di-trans,octa-cis-undecaprenyl diphospho-[N-acetyl-alpha-D-glucosaminyl-(1-&gt;4)]-N-acetyl-alpha-D-muramoyl-L-alanyl-D-glutamyl-meso-2,6-diaminopimeloyl-D-alanyl-D-alanine + UDP + H(+). Its pathway is cell wall biogenesis; peptidoglycan biosynthesis. Cell wall formation. Catalyzes the transfer of a GlcNAc subunit on undecaprenyl-pyrophosphoryl-MurNAc-pentapeptide (lipid intermediate I) to form undecaprenyl-pyrophosphoryl-MurNAc-(pentapeptide)GlcNAc (lipid intermediate II). The polypeptide is UDP-N-acetylglucosamine--N-acetylmuramyl-(pentapeptide) pyrophosphoryl-undecaprenol N-acetylglucosamine transferase (Parabacteroides distasonis (strain ATCC 8503 / DSM 20701 / CIP 104284 / JCM 5825 / NCTC 11152)).